The following is a 133-amino-acid chain: ATP synthase epsilon chain (133 aa).

This sequence belongs to the ATPase epsilon chain family. In terms of assembly, F-type ATPases have 2 components, CF(1) - the catalytic core - and CF(0) - the membrane proton channel. CF(1) has five subunits: alpha(3), beta(3), gamma(1), delta(1), epsilon(1). CF(0) has three main subunits: a, b and c.

It is found in the cell membrane. Its function is as follows. Produces ATP from ADP in the presence of a proton gradient across the membrane. The chain is ATP synthase epsilon chain from Bacillus cytotoxicus (strain DSM 22905 / CIP 110041 / 391-98 / NVH 391-98).